Reading from the N-terminus, the 365-residue chain is Carboxynorspermidine/carboxyspermidine decarboxylase (365 aa).

Lys-37 is subject to N6-(pyridoxal phosphate)lysine. Substrate is bound by residues Glu-233 and Asp-269.

Belongs to the Orn/Lys/Arg decarboxylase class-II family. NspC subfamily. In terms of assembly, homodimer. It depends on pyridoxal 5'-phosphate as a cofactor.

It is found in the cytoplasm. It carries out the reaction carboxynorspermidine + H(+) = norspermidine + CO2. The enzyme catalyses carboxyspermidine + H(+) = spermidine + CO2. In terms of biological role, catalyzes the decarboxylation of carboxynorspermidine and carboxyspermidine. The polypeptide is Carboxynorspermidine/carboxyspermidine decarboxylase (Herminiimonas arsenicoxydans).